The following is a 511-amino-acid chain: Lysine--tRNA ligase (511 aa).

The disordered stretch occupies residues M1 to N21. The segment covering K9–N21 has biased composition (polar residues). 2 residues coordinate Mg(2+): E422 and E429.

The protein belongs to the class-II aminoacyl-tRNA synthetase family. In terms of assembly, homodimer. Requires Mg(2+) as cofactor.

The protein localises to the cytoplasm. The enzyme catalyses tRNA(Lys) + L-lysine + ATP = L-lysyl-tRNA(Lys) + AMP + diphosphate. The protein is Lysine--tRNA ligase of Pelodictyon phaeoclathratiforme (strain DSM 5477 / BU-1).